We begin with the raw amino-acid sequence, 112 residues long: Nucleoid-associated protein FTH_1374 (112 aa).

The tract at residues 1-27 is disordered; it reads MNFDMSKLMQQAQKMQEQMKKAQQERE. Over residues 17-27 the composition is skewed to basic and acidic residues; it reads EQMKKAQQERE.

It belongs to the YbaB/EbfC family. Homodimer.

It is found in the cytoplasm. It localises to the nucleoid. Its function is as follows. Binds to DNA and alters its conformation. May be involved in regulation of gene expression, nucleoid organization and DNA protection. The polypeptide is Nucleoid-associated protein FTH_1374 (Francisella tularensis subsp. holarctica (strain OSU18)).